The chain runs to 400 residues: Homoserine O-acetyltransferase (400 aa).

A disordered region spans residues 1–22 (MMNVHPVKGPVATGGERPHEAD). Residues 64-374 (NAILVCHALT…DKGHDAFLLD (311 aa)) form the AB hydrolase-1 domain. The active-site Nucleophile is S169. R239 is a binding site for substrate. Catalysis depends on residues D335 and H368. D369 provides a ligand contact to substrate.

This sequence belongs to the AB hydrolase superfamily. MetX family. Homodimer.

The protein localises to the cytoplasm. The catalysed reaction is L-homoserine + acetyl-CoA = O-acetyl-L-homoserine + CoA. It functions in the pathway amino-acid biosynthesis; L-methionine biosynthesis via de novo pathway; O-acetyl-L-homoserine from L-homoserine: step 1/1. Functionally, transfers an acetyl group from acetyl-CoA to L-homoserine, forming acetyl-L-homoserine. This Rhodopseudomonas palustris (strain HaA2) protein is Homoserine O-acetyltransferase.